A 184-amino-acid polypeptide reads, in one-letter code: Photosystem I assembly protein Ycf4 (184 aa).

The next 2 helical transmembrane spans lie at 22 to 42 (FFWAFILFLGSLGFLLVGTSS) and 57 to 77 (IIFFPQGIVMSFYGIAGLFIS).

Belongs to the Ycf4 family.

The protein resides in the plastid. It is found in the chloroplast thylakoid membrane. Seems to be required for the assembly of the photosystem I complex. This Aethionema grandiflorum (Persian stone-cress) protein is Photosystem I assembly protein Ycf4.